The primary structure comprises 788 residues: Cadherin-10 (788 aa).

The first 22 residues, 1–22, serve as a signal peptide directing secretion; that stretch reads MTIYQFLRLFVLWACLPHFCCP. A propeptide spanning residues 23–54 is cleaved from the precursor; the sequence is ELTFRRTPGIQQMTAESRAPRSDGKILHRQKR. At 23–613 the chain is on the extracellular side; the sequence is ELTFRRTPGI…LLPAGLSTGA (591 aa). 5 Cadherin domains span residues 56–160, 161–269, 270–384, 385–489, and 489–603; these read WMWN…EPTF, PEEI…PPRF, PQNT…PPVF, SRSS…APQF, and FAVF…AEAL. Asn-256 is a glycosylation site (N-linked (GlcNAc...) asparagine). N-linked (GlcNAc...) asparagine glycans are attached at residues Asn-456 and Asn-534. A helical transmembrane segment spans residues 614-634; the sequence is LIAILLCIIILLVIVVLFAAL. Over 635-788 the chain is Cytoplasmic; it reads KRQRKKEPLI…YGGGESDKDA (154 aa). Phosphoserine is present on Ser-784.

The protein resides in the cell membrane. In terms of biological role, cadherins are calcium-dependent cell adhesion proteins. They preferentially interact with themselves in a homophilic manner in connecting cells; cadherins may thus contribute to the sorting of heterogeneous cell types. The chain is Cadherin-10 (Cdh10) from Mus musculus (Mouse).